The primary structure comprises 3110 residues: Huntingtin (3110 aa).

A disordered region spans residues 1–58 (MKAFESLKSFQQQQQQQQPPPQPPPPPPPPPQPPQPPPQGQPPPPPPLPGPAEEPLHR). Position 2 is an N6-acetyllysine (lysine 2). The segment covering 18 to 52 (QPPPQPPPPPPPPPQPPQPPPQGQPPPPPPLPGPA) has biased composition (pro residues). N6-acetyllysine is present on residues lysine 146 and lysine 204. HEAT repeat units lie at residues 174 to 211 (PYLVNLLPCLTRTSKRPEESVQETLAAAVPKIMASFGN) and 216 to 253 (NEIKVLLKAFIANLKSSSPTVRRTAAGSAVSICQHSRR). Lysine 313 bears the N6-acetyllysine mark. Serine 387, serine 389, and serine 402 each carry phosphoserine. Position 412 is an N6-acetyllysine (lysine 412). Positions 462-473 (GHDIITEQPRSQ) are interaction with ZDHHC17. The interval 487 to 549 (DLTSAATDGD…PDSAVTPSDS (63 aa)) is disordered. Residues 521 to 549 (DGTQASSPISDSSQTTTEGPDSAVTPSDS) show a composition bias toward polar residues. The N-myristoyl glycine moiety is linked to residue glycine 522. Serine 611 and serine 614 each carry phosphoserine. 2 HEAT repeats span residues 773-810 (FSLVDCIPLLQKTLKDESSVTCKLACTAVRHCVLSLCS) and 873-911 (KLQERVLNNVVIYLLGDEDPRVRHVAATTLTRLVPKLFY). Residues 1137-1195 (KAALPSLTNPPSLSPIRRKGKEKEPGEQTSTPMSPKKGGEASTASRQSDTSGPVTASKS) form a disordered region. Over residues 1140 to 1151 (LPSLTNPPSLSP) the composition is skewed to low complexity. Phosphoserine; by CDK5 is present on residues serine 1150 and serine 1170. A compositionally biased stretch (polar residues) spans 1178–1195 (STASRQSDTSGPVTASKS). An HEAT 5 repeat occupies 1395-1432 (LFEPLVIKALKQYTTTTSVQLQKQVLDLLAQLVQLRVN). A Phosphoserine modification is found at serine 1845. The Nuclear export signal motif lies at 2363 to 2372 (IVVSLARLPL). The disordered stretch occupies residues 2601–2628 (EEEWDEEEEEEADAPAPTSPPVSPVNSR). A compositionally biased stretch (acidic residues) spans 2602-2613 (EEWDEEEEEEAD).

The protein belongs to the huntingtin family. Interacts with PFN1. Interacts through its N-terminus with PRPF40A. Interacts with PQBP1. Interacts with SETD2. Interacts with SH3GLB1. Interacts with SYVN. Interacts with TPR; the interaction is inhibited by forms of Huntingtin with expanded polyglutamine stretch. Interacts with ZDHHC13 (via ANK repeats). Interacts with ZDHHC17 (via ANK repeats). Interacts with F8A1/F8A2/F8A3. Found in a complex with F8A1/F8A2/F8A3, HTT and RAB5A; mediates the recruitment of HTT by RAB5A. Phosphorylation at Ser-1150 and Ser-1170 by CDK5 in response to DNA damage in nuclei of neurons protects neurons against polyglutamine expansion as well as DNA damage mediated toxicity. Post-translationally, cleaved by caspases downstream of the polyglutamine stretch. In terms of processing, myristoylated at Gly-522, following proteolytic cleavage at Asp-521. Expressed to a high degree in all the regions of the brain of adults and in meiotic cells of the testis. In addition, very low levels are detected in various non-neuronal tissues (heart, muscle, liver, lung and kidney).

The protein localises to the cytoplasm. The protein resides in the nucleus. Its subcellular location is the cytoplasmic vesicle. It localises to the autophagosome. In terms of biological role, may play a role in microtubule-mediated transport or vesicle function. Functionally, promotes the formation of autophagic vesicles. This Rattus norvegicus (Rat) protein is Huntingtin (Htt).